Here is a 401-residue protein sequence, read N- to C-terminus: Argininosuccinate synthase (401 aa).

ATP contacts are provided by residues 10-18 (AYSGGVDTS) and A38. Residue Y89 coordinates L-citrulline. G119 contributes to the ATP binding site. Residues T121, N125, and D126 each coordinate L-aspartate. N125 lines the L-citrulline pocket. Residues R129, S177, S186, E262, and Y274 each contribute to the L-citrulline site.

The protein belongs to the argininosuccinate synthase family. Type 1 subfamily. Homotetramer.

It is found in the cytoplasm. It carries out the reaction L-citrulline + L-aspartate + ATP = 2-(N(omega)-L-arginino)succinate + AMP + diphosphate + H(+). The protein operates within amino-acid biosynthesis; L-arginine biosynthesis; L-arginine from L-ornithine and carbamoyl phosphate: step 2/3. The protein is Argininosuccinate synthase of Prochlorococcus marinus (strain MIT 9303).